Here is a 360-residue protein sequence, read N- to C-terminus: Ferrochelatase (360 aa).

Fe cation is bound by residues H210 and E291.

It belongs to the ferrochelatase family.

The protein resides in the cytoplasm. The enzyme catalyses heme b + 2 H(+) = protoporphyrin IX + Fe(2+). It functions in the pathway porphyrin-containing compound metabolism; protoheme biosynthesis; protoheme from protoporphyrin-IX: step 1/1. Its function is as follows. Catalyzes the ferrous insertion into protoporphyrin IX. The sequence is that of Ferrochelatase from Pseudoalteromonas atlantica (strain T6c / ATCC BAA-1087).